We begin with the raw amino-acid sequence, 368 residues long: D-alanine--D-alanine ligase (368 aa).

The ATP-grasp domain maps to 141–350 (KMIWDYSGLP…YNELIMHLIE (210 aa)). 176-231 (EKDLEYPLFIKPCRAGSSVGAGMVKNRNELLEQAEESFLWDNKILVEACIEAREVE) serves as a coordination point for ATP. Aspartate 303, glutamate 317, and asparagine 319 together coordinate Mg(2+).

This sequence belongs to the D-alanine--D-alanine ligase family. Mg(2+) serves as cofactor. The cofactor is Mn(2+).

It localises to the cytoplasm. It catalyses the reaction 2 D-alanine + ATP = D-alanyl-D-alanine + ADP + phosphate + H(+). It functions in the pathway cell wall biogenesis; peptidoglycan biosynthesis. Cell wall formation. The polypeptide is D-alanine--D-alanine ligase (Treponema denticola (strain ATCC 35405 / DSM 14222 / CIP 103919 / JCM 8153 / KCTC 15104)).